We begin with the raw amino-acid sequence, 1382 residues long: Hepatocyte growth factor receptor (1382 aa).

Positions 1–24 (MKSPAVLAPGILVFLFTFVQKSDG) are cleaved as a signal peptide. Residues 25-933 (ECKEALVKSR…VIVQPDQNFT (909 aa)) are Extracellular-facing. The 490-residue stretch at 27-516 (KEALVKSRMN…TGKKITKIPL (490 aa)) folds into the Sema domain. Asn-45 carries N-linked (GlcNAc...) asparagine glycosylation. 4 disulfide bridges follow: Cys-95/Cys-101, Cys-98/Cys-160, Cys-133/Cys-141, and Cys-173/Cys-176. Asn-106 carries N-linked (GlcNAc...) asparagine glycosylation. Residue Asn-149 is glycosylated (N-linked (GlcNAc...) asparagine). N-linked (GlcNAc...) asparagine glycans are attached at residues Asn-203 and Asn-359. 2 disulfides stabilise this stretch: Cys-299-Cys-364 and Cys-386-Cys-398. N-linked (GlcNAc...) asparagine glycans are attached at residues Asn-400 and Asn-406. Cystine bridges form between Cys-521–Cys-539, Cys-527–Cys-562, Cys-530–Cys-546, and Cys-542–Cys-552. IPT/TIG domains are found at residues 564–656 (PAIY…FSYV), 658–740 (PIIT…FIYR), and 743–837 (PIVY…LIYV). The O-linked (Man) threonine glycan is linked to Thr-583. 2 N-linked (GlcNAc...) asparagine glycosylation sites follow: Asn-608 and Asn-636. Residues Thr-677 and Thr-762 are each glycosylated (O-linked (Man) threonine). Residues Asn-786, Asn-880, and Asn-931 are each glycosylated (N-linked (GlcNAc...) asparagine). Residues 934–956 (GLIVGVVSISIILLLLLGLFLWL) form a helical membrane-spanning segment. The Cytoplasmic portion of the chain corresponds to 957–1382 (KKRKQIKDLG…QDNVNGEGDT (426 aa)). A Phosphoserine modification is found at Ser-967. Thr-978 is modified (phosphothreonine). Phosphoserine is present on residues Ser-991, Ser-998, and Ser-1001. Tyr-1004 bears the Phosphotyrosine mark. Positions 1079–1346 (VHFNEVIGRG…RISAIFSTFI (268 aa)) constitute a Protein kinase domain. Residues 1085–1093 (IGRGHFGCV) and Lys-1111 each bind ATP. Residue Asp-1205 is the Proton acceptor of the active site. Residues 1213–1382 (LDEKFTVKVA…QDNVNGEGDT (170 aa)) are interaction with RANBP9. Position 1231 is a phosphotyrosine (Tyr-1231). Phosphotyrosine; by autocatalysis is present on residues Tyr-1235 and Tyr-1236. Residue Thr-1290 is modified to Phosphothreonine. An interaction with MUC20 region spans residues 1321–1360 (WHPKAELRPSFSELVSRISAIFSTFIGEHYVHVNATYVNV). Tyr-1350 and Tyr-1357 each carry phosphotyrosine; by autocatalysis. Tyr-1366 carries the phosphotyrosine modification.

The protein belongs to the protein kinase superfamily. Tyr protein kinase family. Heterodimer made of an alpha chain (50 kDa) and a beta chain (145 kDa) which are disulfide linked. Binds PLXNB1. Interacts when phosphorylated with downstream effectors including STAT3, PIK3R1, SRC, PCLG1, GRB2 and GAB1. Interacts with SPSB1, SPSB2 and SPSB4. Interacts with INPP5D/SHIP1. When phosphorylated at Tyr-1357, interacts with INPPL1/SHIP2. Interacts with RANBP9 and RANBP10, as well as SPSB1, SPSB2, SPSB3 and SPSB4. SPSB1 binding occurs in the presence and in the absence of HGF, however HGF treatment has a positive effect on this interaction. Interacts with MUC20; prevents interaction with GRB2 and suppresses hepatocyte growth factor-induced cell proliferation. Interacts with GRB10. Interacts with PTPN1 and PTPN2. Interacts with HSP90AA1 and HSP90AB1; the interaction suppresses MET kinase activity. Interacts with tensin TNS3. Interacts (when phosphorylated) with tensin TNS4 (via SH2 domain); the interaction increases MET protein stability by inhibiting MET endocytosis and subsequent lysosomal degradation. Autophosphorylated in response to ligand binding on Tyr-1235 and Tyr-1236 in the kinase domain leading to further phosphorylation of Tyr-1350 and Tyr-1357 in the C-terminal multifunctional docking site. Dephosphorylated by PTPRJ at Tyr-1350 and Tyr-1366. Dephosphorylated by PTPN1 and PTPN2. Post-translationally, ubiquitinated. Ubiquitination by CBL regulates the receptor stability and activity through proteasomal degradation. In terms of processing, O-mannosylation of IPT/TIG domains by TMEM260 is required for protein maturation. O-mannosylated residues are composed of single mannose glycans that are not elongated or modified.

It localises to the membrane. The enzyme catalyses L-tyrosyl-[protein] + ATP = O-phospho-L-tyrosyl-[protein] + ADP + H(+). With respect to regulation, in its inactive state, the C-terminal tail interacts with the catalytic domain and inhibits the kinase activity. Upon ligand binding, the C-terminal tail is displaced and becomes phosphorylated, thus increasing the kinase activity. In terms of biological role, receptor tyrosine kinase that transduces signals from the extracellular matrix into the cytoplasm by binding to hepatocyte growth factor/HGF ligand. Regulates many physiological processes including proliferation, scattering, morphogenesis and survival. Ligand binding at the cell surface induces autophosphorylation of MET on its intracellular domain that provides docking sites for downstream signaling molecules. Following activation by ligand, interacts with the PI3-kinase subunit PIK3R1, PLCG1, SRC, GRB2, STAT3 or the adapter GAB1. Recruitment of these downstream effectors by MET leads to the activation of several signaling cascades including the RAS-ERK, PI3 kinase-AKT, or PLCgamma-PKC. The RAS-ERK activation is associated with the morphogenetic effects while PI3K/AKT coordinates prosurvival effects. During embryonic development, MET signaling plays a role in gastrulation, development and migration of muscles and neuronal precursors, angiogenesis and kidney formation. In adults, participates in wound healing as well as organ regeneration and tissue remodeling. Also promotes differentiation and proliferation of hematopoietic cells. This chain is Hepatocyte growth factor receptor (MET), found in Muntiacus muntjak (Barking deer).